Consider the following 294-residue polypeptide: Protein farnesyltransferase/geranylgeranyltransferase type-1 subunit alpha (294 aa).

PFTA repeat units lie at residues 57–91, 92–125, 126–160, 161–194, and 199–233; these read YSLRALNLTGFLIMNNPAHYTVWAYRFQILNHTPS, YIDNELEWLDEIAEDFQKNYQVWHHRQKILSLTK, NYERELEFTKKMFEIDSKNYHVWSYRVWILQNFND, YSQELKLTNELLEKDIYNNSAWNHRFYVLFETSK, and SLEEELNYLKDKILFAPDNQSAWNYLCGVLDKSGP.

It belongs to the protein prenyltransferase subunit alpha family. As to quaternary structure, heterodimer of an alpha(cwp1) and a beta(cpp1 or cwg2) subunit. Mg(2+) is required as a cofactor.

The catalysed reaction is L-cysteinyl-[protein] + (2E,6E)-farnesyl diphosphate = S-(2E,6E)-farnesyl-L-cysteinyl-[protein] + diphosphate. It catalyses the reaction geranylgeranyl diphosphate + L-cysteinyl-[protein] = S-geranylgeranyl-L-cysteinyl-[protein] + diphosphate. Functionally, catalyzes the transfer of a farnesyl or geranyl-geranyl moiety from farnesyl or geranyl-geranyl diphosphate to a cysteine at the fourth position from the C-terminus of several proteins having the C-terminal sequence Cys-aliphatic-aliphatic-X. The alpha(cwp1) subunit is thought to participate in a stable complex with the substrate. The beta(cpp1 or cwg2) subunits bind the peptide substrate. This Schizosaccharomyces pombe (strain 972 / ATCC 24843) (Fission yeast) protein is Protein farnesyltransferase/geranylgeranyltransferase type-1 subunit alpha (cwp1).